The chain runs to 417 residues: Serine/threonine-protein phosphatase 4 regulatory subunit 2 (417 aa).

Polar residues-rich tracts occupy residues 140–149, 158–170, and 186–196; these read EKNNSNSLNR, NSPS…NING, and APMTTNGLPES. The interval 140 to 417 is disordered; it reads EKNNSNSLNR…EVTDEPMEQD (278 aa). Position 159 is a phosphoserine (Ser159). Over residues 197–213 the composition is skewed to basic and acidic residues; it reads TDSKEANLQQNEEKNHS. The segment covering 214–226 has biased composition (low complexity); the sequence is DSSTSESEVSSVS. Ser226 carries the post-translational modification Phosphoserine. The span at 231 to 258 shows a compositional bias: basic and acidic residues; it reads KHPDEDAVEAEGHEVKRLRFDKEGEVRE. Residues 259–269 are compositionally biased toward polar residues; that stretch reads TASQTTSSEIS. The span at 283 to 297 shows a compositional bias: basic and acidic residues; it reads QDKDKDSRCTRQHCT. Acidic residues predominate over residues 298-311; that stretch reads EEDEEEDEEEEEES. Basic and acidic residues predominate over residues 318–327; sequence MIPERKNQEK. A compositionally biased stretch (acidic residues) spans 338 to 350; that stretch reads ETSEENNQMEESD. Residues 353-363 show a composition bias toward basic and acidic residues; sequence QAEKDLLHSEG. Positions 366 to 375 are enriched in low complexity; sequence NEGPVSSSSS. Over residues 385–399 the composition is skewed to polar residues; sequence GSNSSKTGEILSESS. Acidic residues predominate over residues 400 to 417; sequence MENDDEATEVTDEPMEQD.

This sequence belongs to the PPP4R2 family. As to quaternary structure, serine/threonine-protein phosphatase 4 (PP4) occurs in different assemblies of the catalytic and one or more regulatory subunits. Component of the PP4 complexes PPP4C-PPP4R2, PPP4C-PPP4R2-PPP4R3A and PPP4C-PPP4R2-PPP4R3B. The PPP4C-PPP4R2 complex appears to be a tetramer composed of 2 molecules of PPP4C and 2 molecules of PPP4R2. Interacts with DDX20/GEMIN3 and GEMIN4. Interacts with RPA2; this DNA damage-dependent interaction recruits PPP4C leading to RPA2 dephosphorylation. In terms of tissue distribution, widely expressed.

The protein localises to the cytoplasm. Its subcellular location is the cytoskeleton. The protein resides in the microtubule organizing center. It is found in the centrosome. It localises to the nucleus. In terms of biological role, regulatory subunit of serine/threonine-protein phosphatase 4 (PP4). May regulate the activity of PPP4C at centrosomal microtubule organizing centers. Its interaction with the SMN complex leads to enhance the temporal localization of snRNPs, suggesting a role of PPP4C in maturation of spliceosomal snRNPs. The PPP4C-PPP4R2-PPP4R3A PP4 complex specifically dephosphorylates H2AX phosphorylated on 'Ser-140' (gamma-H2AX) generated during DNA replication and required for DNA double strand break repair. Mediates RPA2 dephosphorylation by recruiting PPP4C to RPA2 in a DNA damage-dependent manner. RPA2 dephosphorylation is required for the efficient RPA2-mediated recruitment of RAD51 to chromatin following double strand breaks, an essential step for DNA repair. The chain is Serine/threonine-protein phosphatase 4 regulatory subunit 2 (PPP4R2) from Homo sapiens (Human).